A 439-amino-acid polypeptide reads, in one-letter code: Adenylosuccinate synthetase (439 aa).

GTP is bound by residues 25-31 (GDEGKGK) and 53-55 (GHT). The active-site Proton acceptor is the D26. Positions 26 and 53 each coordinate Mg(2+). Residues 26 to 29 (DEGK), 51 to 54 (NAGH), T146, R160, N237, T252, and R316 contribute to the IMP site. The active-site Proton donor is H54. 312–318 (VTTGRRR) provides a ligand contact to substrate. Residues R318, 344-346 (KLD), and 426-428 (GVG) contribute to the GTP site.

This sequence belongs to the adenylosuccinate synthetase family. Homodimer. Mg(2+) serves as cofactor.

The protein localises to the cytoplasm. It carries out the reaction IMP + L-aspartate + GTP = N(6)-(1,2-dicarboxyethyl)-AMP + GDP + phosphate + 2 H(+). Its pathway is purine metabolism; AMP biosynthesis via de novo pathway; AMP from IMP: step 1/2. Its function is as follows. Plays an important role in the de novo pathway and in the salvage pathway of purine nucleotide biosynthesis. Catalyzes the first committed step in the biosynthesis of AMP from IMP. The sequence is that of Adenylosuccinate synthetase from Mycosarcoma maydis (Corn smut fungus).